Here is a 615-residue protein sequence, read N- to C-terminus: Leucine aminopeptidase 2-1 (615 aa).

Residues 137-139 and 261-266 contribute to the substrate site; these read QCQ and PYGGME. His290 provides a ligand contact to Zn(2+). Glu291 serves as the catalytic Proton acceptor. Zn(2+) contacts are provided by His294 and Glu313. Catalysis depends on Tyr380, which acts as the Proton donor.

This sequence belongs to the peptidase M1 family. Requires Zn(2+) as cofactor.

The protein resides in the cytoplasm. The protein localises to the nucleus. It carries out the reaction an epoxide + H2O = an ethanediol. Aminopeptidase that preferentially cleaves di- and tripeptides. Also has low epoxide hydrolase activity (in vitro). Can hydrolyze the epoxide leukotriene LTA(4) but it forms preferentially 5,6-dihydroxy-7,9,11,14-eicosatetraenoic acid rather than the cytokine leukotriene B(4) as the product compared to the homologous mammalian enzyme (in vitro). The sequence is that of Leucine aminopeptidase 2-1 from Meyerozyma guilliermondii (strain ATCC 6260 / CBS 566 / DSM 6381 / JCM 1539 / NBRC 10279 / NRRL Y-324) (Yeast).